Reading from the N-terminus, the 495-residue chain is Probable cytosol aminopeptidase (495 aa).

Lys261 and Asp266 together coordinate Mn(2+). Lys273 is a catalytic residue. Mn(2+) contacts are provided by Asp284, Asp343, and Glu345. Arg347 is an active-site residue.

Belongs to the peptidase M17 family. The cofactor is Mn(2+).

The protein resides in the cytoplasm. The enzyme catalyses Release of an N-terminal amino acid, Xaa-|-Yaa-, in which Xaa is preferably Leu, but may be other amino acids including Pro although not Arg or Lys, and Yaa may be Pro. Amino acid amides and methyl esters are also readily hydrolyzed, but rates on arylamides are exceedingly low.. It catalyses the reaction Release of an N-terminal amino acid, preferentially leucine, but not glutamic or aspartic acids.. Presumably involved in the processing and regular turnover of intracellular proteins. Catalyzes the removal of unsubstituted N-terminal amino acids from various peptides. The polypeptide is Probable cytosol aminopeptidase (Chelativorans sp. (strain BNC1)).